The following is a 263-amino-acid chain: Thiamine thiazole synthase (263 aa).

NAD(+)-binding positions include S36, E55 to R56, G63, V127, and H157 to D159. Fe cation contacts are provided by D159 and H174. Residue M228 participates in NAD(+) binding. Glycine is bound at residue R238.

The protein belongs to the THI4 family. As to quaternary structure, homooctamer; tetramer of dimers. It depends on Fe(2+) as a cofactor.

It catalyses the reaction hydrogen sulfide + glycine + NAD(+) = ADP-5-ethyl-4-methylthiazole-2-carboxylate + nicotinamide + 3 H2O + H(+). The protein operates within cofactor biosynthesis; thiamine diphosphate biosynthesis. Functionally, involved in the biosynthesis of the thiazole moiety of thiamine. Catalyzes the conversion of NAD and glycine to adenosine diphosphate 5-(2-hydroxyethyl)-4-methylthiazole-2-carboxylate (ADT), an adenylated thiazole intermediate, using free sulfide as a source of sulfur. This is Thiamine thiazole synthase from Solidesulfovibrio magneticus (strain ATCC 700980 / DSM 13731 / RS-1) (Desulfovibrio magneticus).